The following is a 559-amino-acid chain: Glucose-6-phosphate isomerase (559 aa).

The active-site Proton donor is Glu363. Residues His394 and Lys523 contribute to the active site.

Belongs to the GPI family.

It localises to the cytoplasm. The enzyme catalyses alpha-D-glucose 6-phosphate = beta-D-fructose 6-phosphate. The protein operates within carbohydrate biosynthesis; gluconeogenesis. Its pathway is carbohydrate degradation; glycolysis; D-glyceraldehyde 3-phosphate and glycerone phosphate from D-glucose: step 2/4. Its function is as follows. Catalyzes the reversible isomerization of glucose-6-phosphate to fructose-6-phosphate. The protein is Glucose-6-phosphate isomerase of Bartonella quintana (strain Toulouse) (Rochalimaea quintana).